Consider the following 406-residue polypeptide: Argininosuccinate synthase (406 aa).

ATP is bound by residues 10–18 and Ala-37; that span reads AYSGGLDTS. Residues Tyr-88 and Ser-93 each coordinate L-citrulline. Residue Gly-118 coordinates ATP. Residues Thr-120, Asn-124, and Asp-125 each contribute to the L-aspartate site. Asn-124 is an L-citrulline binding site. L-citrulline-binding residues include Arg-128, Ser-180, Ser-189, Glu-265, and Tyr-277.

It belongs to the argininosuccinate synthase family. Type 1 subfamily. As to quaternary structure, homotetramer.

It is found in the cytoplasm. The catalysed reaction is L-citrulline + L-aspartate + ATP = 2-(N(omega)-L-arginino)succinate + AMP + diphosphate + H(+). Its pathway is amino-acid biosynthesis; L-arginine biosynthesis; L-arginine from L-ornithine and carbamoyl phosphate: step 2/3. The polypeptide is Argininosuccinate synthase (Methylobacillus flagellatus (strain ATCC 51484 / DSM 6875 / VKM B-1610 / KT)).